Here is a 137-residue protein sequence, read N- to C-terminus: Probable Hsp20 family chaperone (137 aa).

The 113-residue stretch at 25–137 (LTNNNNIMKT…PKEKHYIKLN (113 aa)) folds into the sHSP domain.

This sequence belongs to the small heat shock protein (HSP20) family.

In terms of biological role, probable chaperone. The sequence is that of Probable Hsp20 family chaperone from Onion yellows phytoplasma (strain OY-M).